Reading from the N-terminus, the 421-residue chain is Testin (421 aa).

Residues 92–199 (MILTNPVAAK…GDVKLPCEMD (108 aa)) form the PET domain. The tract at residues 133–164 (EKQPVAGSEGAQYRKKQLAKQLPAHDQDPSKC) is disordered. Basic and acidic residues predominate over residues 155–164 (PAHDQDPSKC). 3 LIM zinc-binding domains span residues 234-297 (YSCY…CDSE), 299-359 (PRCA…NHAV), and 362-421 (QGCH…KMMS).

It belongs to the prickle / espinas / testin family. Interacts via LIM domain 1 with ZYX. Interacts (via LIM domain 3) with ENAH and VASP. Interacts with ALKBH4, talin, actin, alpha-actinin, GRIP1 and PXN. Interacts (via LIM domain 2) with ACTL7A (via N-terminus). Heterodimer with ACTL7A; the heterodimer interacts with ENAH to form a heterotrimer.

The protein resides in the cytoplasm. The protein localises to the cell junction. It is found in the focal adhesion. Scaffold protein that may play a role in cell adhesion, cell spreading and in the reorganization of the actin cytoskeleton. Plays a role in the regulation of cell proliferation. May act as a tumor suppressor. This Ateles geoffroyi (Black-handed spider monkey) protein is Testin (TES).